A 356-amino-acid chain; its full sequence is Outer membrane protein Omp38 (356 aa).

The signal sequence occupies residues 1–19; it reads MKLSRIALATMLVAAPLAA. Residues 221-339 enclose the OmpA-like domain; the sequence is ELTEDLNMEL…RVFATITGSR (119 aa).

This sequence belongs to the outer membrane OOP (TC 1.B.6) superfamily. Homotrimer.

The protein resides in the cell outer membrane. Functionally, porin. Induces apoptosis in human cells through caspases-dependent and AIF-dependent pathways. Purified Omp38 enters the cells and localizes to the mitochondria, which leads to a release of proapoptotic molecules such as cytochrome c and AIF (apoptosis-inducing factor). This is Outer membrane protein Omp38 (omp38) from Acinetobacter baumannii (strain ATCC 17978 / DSM 105126 / CIP 53.77 / LMG 1025 / NCDC KC755 / 5377).